Consider the following 127-residue polypeptide: Large-conductance mechanosensitive channel (127 aa).

The next 3 membrane-spanning stretches (helical) occupy residues 8–28 (FAFKGNVLDLAIGVIIGAAFG), 30–50 (IVTALVDVVIMPIISIILSLI), and 70–90 (IGVLIKTIIEFLIIAFVLFLF).

The protein belongs to the MscL family. Homopentamer.

Its subcellular location is the cell membrane. In terms of biological role, channel that opens in response to stretch forces in the membrane lipid bilayer. May participate in the regulation of osmotic pressure changes within the cell. This Herpetosiphon aurantiacus (strain ATCC 23779 / DSM 785 / 114-95) protein is Large-conductance mechanosensitive channel.